An 825-amino-acid polypeptide reads, in one-letter code: Probable phosphoketolase (825 aa).

The protein belongs to the XFP family. Requires thiamine diphosphate as cofactor.

This chain is Probable phosphoketolase, found in Schizosaccharomyces pombe (strain 972 / ATCC 24843) (Fission yeast).